The primary structure comprises 366 residues: MEDNLPVNVREYQELAKKALPKMAYDYINGGAEDEHTLRENIAAYTRIILRPRVLVDVSKIDMSTTLLGYTMRSPIIVAPTGGHKLAHPEGEKATARAAASCNAIMVLSFSSSCKIEDVASSCNAIRFYQLYVYKNRNVSATLVRRAESCGFKALLLTVDTPMLGRREADIRNKMVFPRSGNLEGLMTIDDHDTTNGSQLERFARATLDPSLSWKDIEWLKSITSMPIFLKGIVTAEDARRAVEAGVAGVIVSNHGARQLDYAPATIAALEEVVRAVAGAVPVLVDGGIRRGTDVFKALALGARAVMXXXPVFFGLAARGEAGARHVIEMLNGELEVAMALCGCRSVGEITRSHVMTEGDRIRSLL.

Residues 1 to 360 (MEDNLPVNVR…TRSHVMTEGD (360 aa)) form the FMN hydroxy acid dehydrogenase domain. Tyr27 is an a 2-oxocarboxylate binding site. Residues 80–82 (PTG), Ser109, 130–132 (QLY), and Thr158 contribute to the FMN site. Tyr132 serves as a coordination point for a 2-oxocarboxylate. Arg167 is an a 2-oxocarboxylate binding site. Residues Lys231 and Ser253 each coordinate FMN. His255 functions as the Proton acceptor in the catalytic mechanism. A 2-oxocarboxylate is bound at residue Arg258. FMN-binding positions include 286–290 (DGGIR) and 309–310 (XX). A Microbody targeting signal motif is present at residues 364–366 (SLL).

Belongs to the FMN-dependent alpha-hydroxy acid dehydrogenase family. Homotetramer. It depends on FMN as a cofactor.

It localises to the peroxisome. The catalysed reaction is a (2S)-2-hydroxycarboxylate + O2 = a 2-oxocarboxylate + H2O2. Its pathway is lipid metabolism; fatty acid metabolism. In terms of biological role, oxidase that catalyzes the oxidation of a broad range of 2-hydroxyacids to the corresponding 2-oxoacids, with a reduction of O2 to H2O2. May be involved in a general medium- and long-chain fatty acid catabolic pathway such as alpha-oxidation. This Oryza sativa subsp. indica (Rice) protein is Peroxisomal (S)-2-hydroxy-acid oxidase GLO4 (GLO4).